We begin with the raw amino-acid sequence, 95 residues long: UPF0132 membrane protein AF_0736 (95 aa).

Transmembrane regions (helical) follow at residues Cys2–Val22, Thr32–Leu52, and Val55–Glu75.

Belongs to the UPF0132 family.

The protein resides in the cell membrane. This chain is UPF0132 membrane protein AF_0736, found in Archaeoglobus fulgidus (strain ATCC 49558 / DSM 4304 / JCM 9628 / NBRC 100126 / VC-16).